A 343-amino-acid polypeptide reads, in one-letter code: Phenylalanine--tRNA ligase alpha subunit (343 aa).

E268 serves as a coordination point for Mg(2+).

It belongs to the class-II aminoacyl-tRNA synthetase family. Phe-tRNA synthetase alpha subunit type 1 subfamily. As to quaternary structure, tetramer of two alpha and two beta subunits. The cofactor is Mg(2+).

It is found in the cytoplasm. It catalyses the reaction tRNA(Phe) + L-phenylalanine + ATP = L-phenylalanyl-tRNA(Phe) + AMP + diphosphate + H(+). This chain is Phenylalanine--tRNA ligase alpha subunit, found in Cupriavidus taiwanensis (strain DSM 17343 / BCRC 17206 / CCUG 44338 / CIP 107171 / LMG 19424 / R1) (Ralstonia taiwanensis (strain LMG 19424)).